The chain runs to 451 residues: Tubulin alpha-3 chain (451 aa).

Gln-11 serves as a coordination point for GTP. An N6-acetyllysine modification is found at Lys-40. Residues Glu-71, Ser-140, Gly-144, Thr-145, Thr-179, Asn-206, and Asn-228 each contribute to the GTP site. A Mg(2+)-binding site is contributed by Glu-71. Glu-254 is a catalytic residue.

Belongs to the tubulin family. Dimer of alpha and beta chains. A typical microtubule is a hollow water-filled tube with an outer diameter of 25 nm and an inner diameter of 15 nM. Alpha-beta heterodimers associate head-to-tail to form protofilaments running lengthwise along the microtubule wall with the beta-tubulin subunit facing the microtubule plus end conferring a structural polarity. Microtubules usually have 13 protofilaments but different protofilament numbers can be found in some organisms and specialized cells. The cofactor is Mg(2+). In terms of processing, undergoes a tyrosination/detyrosination cycle, the cyclic removal and re-addition of a C-terminal tyrosine residue by the enzymes tubulin tyrosine carboxypeptidase (TTCP) and tubulin tyrosine ligase (TTL), respectively. Acetylation of alpha chains at Lys-40 stabilizes microtubules and affects affinity and processivity of microtubule motors. This modification has a role in multiple cellular functions, ranging from cell motility, cell cycle progression or cell differentiation to intracellular trafficking and signaling.

The protein resides in the cytoplasm. The protein localises to the cytoskeleton. The enzyme catalyses GTP + H2O = GDP + phosphate + H(+). In terms of biological role, tubulin is the major constituent of microtubules, a cylinder consisting of laterally associated linear protofilaments composed of alpha- and beta-tubulin heterodimers. Microtubules grow by the addition of GTP-tubulin dimers to the microtubule end, where a stabilizing cap forms. Below the cap, tubulin dimers are in GDP-bound state, owing to GTPase activity of alpha-tubulin. The chain is Tubulin alpha-3 chain from Homarus americanus (American lobster).